The sequence spans 370 residues: WAT1-related protein At1g44800 (370 aa).

Transmembrane regions (helical) follow at residues 11 to 31 (PILA…ITMV), 41 to 61 (VLAT…ALMF), 67 to 87 (PKMT…EPLM), 102 to 122 (SYTS…ALIF), 142 to 162 (VITV…IEIV), 182 to 202 (WVLG…FFIL), 216 to 236 (LVTL…LIMV), 252 to 272 (AAVY…SIVI), 278 to 298 (VFTT…GALV), and 303 to 323 (IHLG…SVVW). EamA domains are found at residues 23-143 (AGMY…GTVI) and 195-322 (TWAA…YSVV).

This sequence belongs to the drug/metabolite transporter (DMT) superfamily. Plant drug/metabolite exporter (P-DME) (TC 2.A.7.4) family.

The protein resides in the membrane. This is WAT1-related protein At1g44800 from Arabidopsis thaliana (Mouse-ear cress).